Consider the following 1077-residue polypeptide: TSC22 domain family protein 1 (1077 aa).

The required for interaction with TGFBR1 and promotion of TGF-beta signaling stretch occupies residues 1–98 (MHQPPESTAA…SQAQLQGQPL (98 aa)). 5 disordered regions span residues 22–112 (MAHP…SGFQ), 125–283 (ISSN…VPSS), 458–492 (QTPT…SVGS), 842–874 (SSAA…GSLV), and 909–947 (QAIG…SDGS). The segment covering 58–70 (FPPPSLLQPPPPA) has biased composition (pro residues). A compositionally biased stretch (low complexity) spans 84 to 96 (SLNLLSQAQLQGQ). Acidic residues predominate over residues 133–142 (EDTESYDDLD). The segment covering 216-240 (HPHHLHHHHHPHHGHHLHHGHHHSS) has biased composition (basic residues). S263 bears the Phosphoserine mark. Over residues 471–489 (TSGSSVSSSVSTLSHYTES) the composition is skewed to low complexity. Over residues 852–874 (VPTNLVPPQNIAQPPATQNGSLV) the composition is skewed to polar residues. The segment covering 933 to 947 (MSGDSGGMSAVSDGS) has biased composition (low complexity). Positions 1010-1031 (LKEQIKELIEKNSQLEQENNLL) are leucine-zipper. Residues 1042–1077 (QFQAQLQTGSPPATTQPQGTTQPPAQPASQGSGSTA) are disordered. The span at 1048 to 1077 (QTGSPPATTQPQGTTQPPAQPASQGSGSTA) shows a compositional bias: low complexity.

This sequence belongs to the TSC-22/Dip/Bun family. Forms homodimers. Forms heterodimers. Component of a complex composed of TSC22D1 (via N-terminus), TGFBR1 and TGFBR2; the interaction between TSC22D1 and TGFBR1 is inhibited by SMAD7 and promoted by TGFB1. Interacts with SMAD7; the interaction requires TGF-beta and the interaction is inhibited by TGFBR1. Interacts with TPT1/fortilin; interaction results in the destabilization of TSC22D1 protein and prevents TSC22D1-mediated apoptosis. Interacts with SMAD4 (via N-terminus). Interacts with ACVRL1/ALK1, ACVR1/ALK2, BMPR1A/ALK3, ACVR1B/ALK4, BMPR1B/ALK6, ACVR2A/ACTRII, and BMPR2. Interacts with SMAD6. Interacts with TFE3; the interaction is enhanced in the presence of TGF-beta. In terms of assembly, forms a heterodimer with TSC22D4/THG1. As to quaternary structure, forms a heterodimer with TSC22D4/THG1. Interacts with histone H1-2. Interacts with GNL3. As to expression, expressed in bone marrow cells (at protein level). Expressed in T-cells. Expressed in the brain. Expressed in the myoepithelial cells of the mammary gland ducts and alveoli, expression is consistent throughout pregnancy, lactation and involution (at protein level). Expressed in the cortex, medulla and papilla of the kidney. In terms of tissue distribution, expressed in the myoepithelial cells of the mammary gland, expression significantly increases in the secretory luminal epithelium of the mammary gland at the initiation of involution, with levels decreasing from day 3 of involution onwards (at protein level). Expressed in the cortex, medulla and papilla of the kidney.

It is found in the cytoplasm. The protein resides in the nucleus. It localises to the cell membrane. Its subcellular location is the mitochondrion. Its function is as follows. Transcriptional repressor. Acts on the C-type natriuretic peptide (CNP) promoter. Acts to promote CASP3-mediated apoptosis. Positively regulates TGF-beta signaling by interacting with SMAD7 which inhibits binding of SMAD7 to TGFBR1, preventing recruitment of SMURF ubiquitin ligases to TGFBR1 and inhibiting SMURF-mediated ubiquitination and degradation of TGFBR1. Contributes to enhancement of TGF-beta signaling by binding to and modulating the transcription activator activity of SMAD4. Promotes TGF-beta-induced transcription of COL1A2; via its interaction with TFE3 at E-boxes in the gene proximal promoter. Plays a role in the repression of hematopoietic precursor cell growth. Promotes IL2 deprivation-induced apoptosis in T-lymphocytes, via repression of TSC22D3/GILZ transcription and activation of the caspase cascade. In terms of biological role, may act to negatively regulate TGFB3 signaling and thereby inhibit cell death in mammary gland cells. Positively regulates cell death in response to TGFB3 during mammary gland involution. The chain is TSC22 domain family protein 1 from Mus musculus (Mouse).